The following is a 450-amino-acid chain: Phosphoglucosamine mutase (450 aa).

Ser102 acts as the Phosphoserine intermediate in catalysis. Mg(2+)-binding residues include Ser102, Asp242, Asp244, and Asp246. At Ser102 the chain carries Phosphoserine.

Belongs to the phosphohexose mutase family. Requires Mg(2+) as cofactor. Activated by phosphorylation.

The enzyme catalyses alpha-D-glucosamine 1-phosphate = D-glucosamine 6-phosphate. In terms of biological role, catalyzes the conversion of glucosamine-6-phosphate to glucosamine-1-phosphate. The protein is Phosphoglucosamine mutase of Staphylococcus haemolyticus (strain JCSC1435).